Reading from the N-terminus, the 356-residue chain is GDP-mannose:di-myo-inositol-1,3'-phosphate beta-1,2-mannosyltransferase (356 aa).

It belongs to the MDIP synthase family. It depends on Mg(2+) as a cofactor.

The enzyme catalyses bis(myo-inositol) 1,3'-phosphate + GDP-alpha-D-mannose = 2-O-(beta-D-mannosyl)-bis(myo-inositol) 1,3'-phosphate + GDP + H(+). The catalysed reaction is 2-O-(beta-D-mannosyl)-bis(myo-inositol) 1,3'-phosphate + GDP-alpha-D-mannose = 2-O-(beta-D-mannosyl-(1-&gt;2)-beta-D-mannosyl)-bis(myo-inositol) 1,3'-phosphate + GDP + H(+). It carries out the reaction bis(myo-inositol) 1,3'-phosphate + 2 GDP-alpha-D-mannose = 2-O-(beta-D-mannosyl-(1-&gt;2)-beta-D-mannosyl)-bis(myo-inositol) 1,3'-phosphate + 2 GDP + 2 H(+). Catalyzes the transfer of the mannosyl group from GDP-mannose to di-myo-inositol-1,3'-phosphate (DIP), producing mannosyl-di-myo-inositol phosphate (MDIP). Can also use MDIP as an acceptor of a second mannose residue, yielding di-mannosyl-di-myo-inositol phosphate (MMDIP). Minor amounts of the tri-mannosylated form are also formed. In Thermotoga maritima (strain ATCC 43589 / DSM 3109 / JCM 10099 / NBRC 100826 / MSB8), this protein is GDP-mannose:di-myo-inositol-1,3'-phosphate beta-1,2-mannosyltransferase.